The chain runs to 274 residues: Large ribosomal subunit protein uL2cz/uL2cy (274 aa).

Disordered regions lie at residues 1–21 (MAIHLYKTSTPGTRNGAVDSQ) and 225–274 (PVDH…RRSK).

Belongs to the universal ribosomal protein uL2 family. Part of the 50S ribosomal subunit.

Its subcellular location is the plastid. It is found in the chloroplast. The chain is Large ribosomal subunit protein uL2cz/uL2cy (rpl2-A) from Gossypium barbadense (Sea Island cotton).